Consider the following 126-residue polypeptide: MARILGVDIPDNKRGEIALTYIFGIGRSSANQILAAAGVNKDKRVSSWTDEESQTIRTVINENYKVEGELKSEIRLNIKRLVDIGCYRGRRHVLGLPVRGQSTKNNARTRKGKRKTVANKKKAAKK.

The interval 98-126 (VRGQSTKNNARTRKGKRKTVANKKKAAKK) is disordered. Positions 107-126 (ARTRKGKRKTVANKKKAAKK) are enriched in basic residues.

Belongs to the universal ribosomal protein uS13 family. Part of the 30S ribosomal subunit. Forms a loose heterodimer with protein S19. Forms two bridges to the 50S subunit in the 70S ribosome.

Located at the top of the head of the 30S subunit, it contacts several helices of the 16S rRNA. In the 70S ribosome it contacts the 23S rRNA (bridge B1a) and protein L5 of the 50S subunit (bridge B1b), connecting the 2 subunits; these bridges are implicated in subunit movement. Contacts the tRNAs in the A and P-sites. The sequence is that of Small ribosomal subunit protein uS13 from Amoebophilus asiaticus (strain 5a2).